Here is a 747-residue protein sequence, read N- to C-terminus: Endoglucanase C (747 aa).

An N-terminal signal peptide occupies residues 1 to 37 (MGHVTSPSKRYPASFKRAGSILGVSIALAAFSNVAAA). In terms of domain architecture, CBM2 spans 38–136 (GCEYVVTNSW…TVNGAACTGG (99 aa)). Cystine bridges form between Cys39–Cys133, Cys183–Cys214, and Cys193–Cys208. The region spanning 182–211 (QCNWYGTLYPLCVSTTSGWGYENNRSCISP) is the CBM10 domain. Residues 226–283 (GSSSPSSISSSSVRSSSSSSVVPPSSSSSSSVPSSSSSSVSSSSVVSSSSSSVSVPGT) are disordered. The segment covering 227–281 (SSSPSSISSSSVRSSSSSSVVPPSSSSSSSVPSSSSSSVSSSSVVSSSSSSVSVP) has biased composition (low complexity). The catalytic stretch occupies residues 280-747 (VPGTGVFRVN…TQLLHNMWGL (468 aa)). The active-site Proton donor is the Glu502. Catalysis depends on Glu652, which acts as the Nucleophile.

Belongs to the glycosyl hydrolase 5 (cellulase A) family.

It catalyses the reaction Endohydrolysis of (1-&gt;4)-beta-D-glucosidic linkages in cellulose, lichenin and cereal beta-D-glucans.. The polypeptide is Endoglucanase C (celC) (Cellvibrio japonicus (strain Ueda107) (Pseudomonas fluorescens subsp. cellulosa)).